A 122-amino-acid polypeptide reads, in one-letter code: Large ribosomal subunit protein uL14 (122 aa).

It belongs to the universal ribosomal protein uL14 family. In terms of assembly, part of the 50S ribosomal subunit. Forms a cluster with proteins L3 and L19. In the 70S ribosome, L14 and L19 interact and together make contacts with the 16S rRNA in bridges B5 and B8.

Binds to 23S rRNA. Forms part of two intersubunit bridges in the 70S ribosome. This chain is Large ribosomal subunit protein uL14, found in Natranaerobius thermophilus (strain ATCC BAA-1301 / DSM 18059 / JW/NM-WN-LF).